The primary structure comprises 263 residues: Tryptophan 2,3-dioxygenase (263 aa).

Substrate-binding positions include 32–36 (FIIVH), tyrosine 94, and arginine 98. Residue histidine 221 coordinates heme. Threonine 235 is a substrate binding site.

It belongs to the tryptophan 2,3-dioxygenase family. As to quaternary structure, homotetramer. The cofactor is heme.

The catalysed reaction is L-tryptophan + O2 = N-formyl-L-kynurenine. It participates in amino-acid degradation; L-tryptophan degradation via kynurenine pathway; L-kynurenine from L-tryptophan: step 1/2. Functionally, heme-dependent dioxygenase that catalyzes the oxidative cleavage of the L-tryptophan (L-Trp) pyrrole ring and converts L-tryptophan to N-formyl-L-kynurenine. Catalyzes the oxidative cleavage of the indole moiety. The chain is Tryptophan 2,3-dioxygenase from Erythrobacter litoralis (strain HTCC2594).